A 543-amino-acid polypeptide reads, in one-letter code: Chaperonin GroEL 2 (543 aa).

ATP is bound by residues 29-32, 86-90, glycine 413, 478-480, and aspartate 494; these read TLGP, DGTTT, and NAA.

It belongs to the chaperonin (HSP60) family. As to quaternary structure, forms a cylinder of 14 subunits composed of two heptameric rings stacked back-to-back. Interacts with the co-chaperonin GroES.

Its subcellular location is the cytoplasm. It catalyses the reaction ATP + H2O + a folded polypeptide = ADP + phosphate + an unfolded polypeptide.. Together with its co-chaperonin GroES, plays an essential role in assisting protein folding. The GroEL-GroES system forms a nano-cage that allows encapsulation of the non-native substrate proteins and provides a physical environment optimized to promote and accelerate protein folding. In Thermosynechococcus vestitus (strain NIES-2133 / IAM M-273 / BP-1), this protein is Chaperonin GroEL 2.